The sequence spans 279 residues: Pantothenate synthetase (279 aa).

30-37 is a binding site for ATP; it reads MGALHAGH. His-37 (proton donor) is an active-site residue. Residue Gln-61 coordinates (R)-pantoate. Beta-alanine is bound at residue Gln-61. An ATP-binding site is contributed by 147-150; sequence GEKD. Gln-153 lines the (R)-pantoate pocket. ATP-binding positions include Ala-176 and 184–187; that span reads LSSR.

It belongs to the pantothenate synthetase family. As to quaternary structure, homodimer.

The protein localises to the cytoplasm. The catalysed reaction is (R)-pantoate + beta-alanine + ATP = (R)-pantothenate + AMP + diphosphate + H(+). The protein operates within cofactor biosynthesis; (R)-pantothenate biosynthesis; (R)-pantothenate from (R)-pantoate and beta-alanine: step 1/1. Its function is as follows. Catalyzes the condensation of pantoate with beta-alanine in an ATP-dependent reaction via a pantoyl-adenylate intermediate. This chain is Pantothenate synthetase, found in Sphingopyxis alaskensis (strain DSM 13593 / LMG 18877 / RB2256) (Sphingomonas alaskensis).